The sequence spans 910 residues: Seizure 6-like protein 2 (910 aa).

The N-terminal stretch at 1–27 is a signal peptide; sequence MGTPRAQHPPPPQLLFLILLSCPWIQG. Over 28–844 the chain is Extracellular; that stretch reads LPLKEEEILP…DPSRQLEGGN (817 aa). The interval 41–48 is O-glycosylated at one site; the sequence is SETPTVAS. Residues 65–152 are disordered; the sequence is EMGYLPGSDR…PLGPEGGEEE (88 aa). The span at 123–145 shows a compositional bias: pro residues; it reads LTPPPGTTAPPPPSPASPGPPLG. Cysteines 173 and 202 form a disulfide. The region spanning 173-286 is the CUB 1 domain; it reads CNNNISEGEG…GGFRIHYQAY (114 aa). Residues Asn176, Asn222, and Asn247 are each glycosylated (N-linked (GlcNAc...) asparagine). The Sushi 1 domain maps to 288–347; the sequence is LSCGFPPRPAHGDVSVTDLHPGGTATFHCDSGYQLQGEETLICLNGTRPSWNGETPSCMA. 6 disulfides stabilise this stretch: Cys290–Cys330, Cys316–Cys345, Cys349–Cys376, Cys464–Cys508, Cys491–Cys523, and Cys527–Cys553. N-linked (GlcNAc...) asparagine glycans are attached at residues Asn332, Asn355, Asn373, Asn473, and Asn517. A CUB 2 domain is found at 349-459; it reads CGGTIHNATL…LLLSLRFEAF (111 aa). Residues 462-525 form the Sushi 2 domain; it reads DRCFAPFLAH…WNDTEPACKA (64 aa). Residues 527-638 form the CUB 3 domain; it reads CGGELSEPAG…QGFVLHFKEV (112 aa). An N-linked (GlcNAc...) asparagine glycan is attached at Asn641. 3 Sushi domains span residues 642–701, 703–766, and 769–830; these read DTCP…ACQK, MTCA…KCAL, and EPCL…LCKV. Cystine bridges form between Cys644-Cys686, Cys672-Cys699, Cys705-Cys747, Cys733-Cys764, Cys771-Cys813, and Cys799-Cys828. The chain crosses the membrane as a helical span at residues 845 to 865; sequence LALAILLPLGLVIVLGSGVYI. The Cytoplasmic portion of the chain corresponds to 866–910; it reads YYTKLQGKSLFGFSGSHSYSPITVESDFSNPLYEAGDTREYEVSI.

Belongs to the SEZ6 family. Post-translationally, O-glycosylated with core 1 or possibly core 8 glycans.

The protein localises to the cell membrane. Its subcellular location is the endoplasmic reticulum membrane. Functionally, may contribute to specialized endoplasmic reticulum functions in neurons. This chain is Seizure 6-like protein 2 (SEZ6L2), found in Homo sapiens (Human).